A 348-amino-acid chain; its full sequence is Protein RecA (348 aa).

ATP is bound at residue 65–72; it reads GPESSGKT.

Belongs to the RecA family.

Its subcellular location is the cytoplasm. In terms of biological role, can catalyze the hydrolysis of ATP in the presence of single-stranded DNA, the ATP-dependent uptake of single-stranded DNA by duplex DNA, and the ATP-dependent hybridization of homologous single-stranded DNAs. It interacts with LexA causing its activation and leading to its autocatalytic cleavage. The protein is Protein RecA of Vibrio natriegens.